A 977-amino-acid polypeptide reads, in one-letter code: Macrophage colony-stimulating factor 1 receptor (977 aa).

Positions 1 to 18 (MFFALLFLIGILLGQVQG) are cleaved as a signal peptide. The Extracellular portion of the chain corresponds to 19 to 519 (WSEPRIRLSS…MEVSDQIFTS (501 aa)). Ig-like C2-type domains lie at 22 to 109 (PRIR…VHVF), 120 to 198 (PSTS…EKVS), 213 to 305 (PYVY…TQLL), 316 to 407 (PKLS…ASIT), and 408 to 513 (FDIK…MEVS). A disulfide bridge connects residues C48 and C92. N-linked (GlcNAc...) asparagine glycosylation is found at N98, N101, N154, N163, N244, N286, N298, N361, N424, and N455. Disulfide bonds link C138/C187 and C234/C289. C430 and C495 are joined by a disulfide. Residues 520 to 540 (AMCGSTVAMVVLGLLLIFMIY) traverse the membrane as a helical segment. Over 541 to 977 (KYKQKPRYEI…LMKPNNYQFC (437 aa)) the chain is Cytoplasmic. Residues 544–576 (QKPRYEIRWKIIEATNGNNYTFIDPTQLPYNEK) are regulatory juxtamembrane domain. Residue Y563 is modified to Phosphotyrosine; by autocatalysis. A Protein kinase domain is found at 584-917 (LKLGKTLGAG…KISQMIQRML (334 aa)). Residues 590–598 (LGAGAFGKV) and K618 each bind ATP. 2 positions are modified to phosphotyrosine; by autocatalysis: Y701 and Y725. D781 acts as the Proton acceptor in catalysis. The segment at 799 to 821 (DFGLARDIMNDSNYVVKGNARLP) is activation loop. Phosphotyrosine; by autocatalysis occurs at positions 812 and 929. The interval 919–977 (ETSEQQDTQEYKNIPTEAEAEQQLESCDPVKHEDESFETSCDQEEEDQPLMKPNNYQFC) is disordered. Positions 953 to 966 (ESFETSCDQEEEDQ) are enriched in acidic residues. Y974 is modified (phosphotyrosine; by autocatalysis).

It belongs to the protein kinase superfamily. Tyr protein kinase family. CSF-1/PDGF receptor subfamily. As to quaternary structure, monomer. Homodimer. Interacts with CSF1. Post-translationally, autophosphorylated in response to CSF1 binding. autophosphorylation, leading to its degradation. Ubiquitinated. Becomes rapidly polyubiquitinated after autophosphorylation, leading to its degradation.

It localises to the cell membrane. The catalysed reaction is L-tyrosyl-[protein] + ATP = O-phospho-L-tyrosyl-[protein] + ADP + H(+). With respect to regulation, present in an inactive conformation in the absence of bound ligand. CSF1 binding leads to dimerization and activation by autophosphorylation on tyrosine residues. In terms of biological role, tyrosine-protein kinase that acts as a cell-surface receptor for CSF1 and plays an essential role in the regulation of survival, proliferation and differentiation of hematopoietic precursor cells, especially mononuclear phagocytes, such as macrophages and monocytes. Plays an important role in innate immunity and in inflammatory processes. Plays an important role in the regulation of osteoclast proliferation and differentiation, the regulation of bone resorption, and is required for normal bone development. Promotes reorganization of the actin cytoskeleton, regulates formation of membrane ruffles, cell adhesion and cell migration. Activates several signaling pathways in response to ligand binding. The sequence is that of Macrophage colony-stimulating factor 1 receptor (csf1r) from Danio rerio (Zebrafish).